Reading from the N-terminus, the 351-residue chain is Ferrochelatase (351 aa).

Residues H221 and E302 each coordinate Fe cation.

It belongs to the ferrochelatase family.

The protein resides in the cytoplasm. The catalysed reaction is heme b + 2 H(+) = protoporphyrin IX + Fe(2+). It participates in porphyrin-containing compound metabolism; protoheme biosynthesis; protoheme from protoporphyrin-IX: step 1/1. Functionally, catalyzes the ferrous insertion into protoporphyrin IX. This chain is Ferrochelatase, found in Bradyrhizobium sp. (strain BTAi1 / ATCC BAA-1182).